Here is a 115-residue protein sequence, read N- to C-terminus: Protein Diedel (115 aa).

An N-terminal signal peptide occupies residues 1–24; that stretch reads MASPVVSLLLVGICALAFVHVARS. Intrachain disulfides connect cysteine 26–cysteine 81, cysteine 27–cysteine 87, cysteine 42–cysteine 55, cysteine 60–cysteine 71, and cysteine 76–cysteine 83.

Belongs to the Diedel family. Detected in hemolymph (at protein level). Also expressed in the fat body and is probably synthesized in the fat body and secreted into the hemolymph.

The protein localises to the secreted. In terms of biological role, cytokine which promotes survival following infection by Sindbis virus by suppressing the immune deficiency pathway. Following infection by the enteropathogenic bacteria E.carotovora limits intestinal stem cells proliferation. When secreted from muscle or adipose tissue, can attenuate age-related intestinal tissue degeneration by inhibiting apoptosis. This chain is Protein Diedel, found in Drosophila melanogaster (Fruit fly).